Here is a 277-residue protein sequence, read N- to C-terminus: MKKTQQKEIENVTNITGVRQIELWRHDDLQHPRLDEVAEEVPVALVYNGISHVVMMASPKDLEYFALGFSLSEGIIESPRDIFGMDVVPSCNGLEVQIELSSRRFMGLKERRRALAGRTGCGVCGVEQLNDIGKPVQPLPFTQTFDLNKLDDALRHLNDFQPVGQLTGCTHAAAWMLPSGELVGGHEDVGRHVALDKLLGRRSQEGESWQQGAVLVSSRASYEMVQKSAMCGVEILFAVSAATTLAVEVAERCNLTLVGFCKPGRATVYTHPQRLSN.

The active-site Cysteine persulfide intermediate is cysteine 121. Phenylalanine 260–arginine 265 lines the Mo-bis(molybdopterin guanine dinucleotide) pocket.

This sequence belongs to the FdhD family.

Its subcellular location is the cytoplasm. In terms of biological role, required for formate dehydrogenase (FDH) activity. Acts as a sulfur carrier protein that transfers sulfur from IscS to the molybdenum cofactor prior to its insertion into FDH. This chain is Sulfur carrier protein FdhD, found in Escherichia coli O6:K15:H31 (strain 536 / UPEC).